Consider the following 179-residue polypeptide: CASP-like protein 5A2 (179 aa).

Topologically, residues 1–54 (MEATSHPAVHPVAVPPQFQGAGPPAIQMKDFPGSPGTAGGLALRFTQFGFSLIS) are cytoplasmic. The next 2 helical transmembrane spans lie at 55-75 (LCIMVSIAGFSSVTAFCFLVA) and 76-96 (TMVFQCIWSLCLGALDIYALL). The Cytoplasmic segment spans residues 97–114 (TQRSFRNPLIVSLFVVGD). The helical transmembrane segment at 115 to 135 (WVTSTMTFAGACAAAGITVLI) threads the bilayer. The Extracellular segment spans residues 136 to 154 (DNDLEQCGPNHCGRFEAAA). Residues 155–175 (AMAFMSWTATTLSFCLSFWLL) form a helical membrane-spanning segment. Topologically, residues 176–179 (ASCR) are cytoplasmic.

It belongs to the Casparian strip membrane proteins (CASP) family. In terms of assembly, homodimer and heterodimers.

It localises to the cell membrane. The polypeptide is CASP-like protein 5A2 (Physcomitrium patens (Spreading-leaved earth moss)).